A 376-amino-acid chain; its full sequence is N-acetyldiaminopimelate deacetylase (376 aa).

The active site involves D70. E129 (proton acceptor) is an active-site residue.

Belongs to the peptidase M20A family. N-acetyldiaminopimelate deacetylase subfamily.

It carries out the reaction N-acetyl-(2S,6S)-2,6-diaminopimelate + H2O = (2S,6S)-2,6-diaminopimelate + acetate. It functions in the pathway amino-acid biosynthesis; L-lysine biosynthesis via DAP pathway; LL-2,6-diaminopimelate from (S)-tetrahydrodipicolinate (acetylase route): step 3/3. Catalyzes the conversion of N-acetyl-diaminopimelate to diaminopimelate and acetate. This chain is N-acetyldiaminopimelate deacetylase, found in Bacillus pumilus (strain SAFR-032).